Here is a 231-residue protein sequence, read N- to C-terminus: Thiamine import ATP-binding protein ThiQ (231 aa).

The 229-residue stretch at 2-230 (LRLEDLDIRK…PPPALRGYLG (229 aa)) folds into the ABC transporter domain. 32 to 39 (GPSGAGKS) serves as a coordination point for ATP.

This sequence belongs to the ABC transporter superfamily. Thiamine importer (TC 3.A.1.19.1) family. In terms of assembly, the complex is composed of two ATP-binding proteins (ThiQ), two transmembrane proteins (ThiP) and a solute-binding protein (ThiB).

It is found in the cell inner membrane. The catalysed reaction is thiamine(out) + ATP + H2O = thiamine(in) + ADP + phosphate + H(+). Part of the ABC transporter complex ThiBPQ involved in thiamine import. Responsible for energy coupling to the transport system. The polypeptide is Thiamine import ATP-binding protein ThiQ (Ruegeria sp. (strain TM1040) (Silicibacter sp.)).